A 747-amino-acid polypeptide reads, in one-letter code: WD repeat-containing protein 91 (747 aa).

Positions 183–227 (QRTNQVQEENEVLRQKLFALQAEVHRLKKEEQQQEEAAALVQHKL) form a coiled coil. Ser-256 carries the post-translational modification Phosphoserine. Low complexity predominate over residues 265 to 278 (LLPQSKKSPSRLSP). The disordered stretch occupies residues 265-358 (LLPQSKKSPS…SQTQCAEKKL (94 aa)). Polar residues predominate over residues 283–299 (PQAQSSAKKDTFSSQAT). A Phosphoserine modification is found at Ser-288. The span at 332–343 (RLQDHGKERREL) shows a compositional bias: basic and acidic residues. A compositionally biased stretch (polar residues) spans 344 to 353 (LSTSSSQTQC). WD repeat units follow at residues 406–445 (EHHS…QTKA), 448–488 (ISKS…NLCE), 511–555 (VCSA…QQLQ), 560–599 (PEPI…CAMS), 602–641 (AHCG…LKVS), 664–702 (VQVP…KVLE), and 709–747 (GHRA…AHKL).

The protein belongs to the WD repeat WDR91 family. In terms of assembly, interacts with WDR81; involved in early to late endosome cargo transport. Interacts with BECN1; negatively regulates the PI3 kinase/PI3K activity associated with endosomal membranes.

The protein resides in the early endosome membrane. Its subcellular location is the late endosome membrane. In terms of biological role, functions as a negative regulator of the PI3 kinase/PI3K activity associated with endosomal membranes via BECN1, a core subunit of the PI3K complex. By modifying the phosphatidylinositol 3-phosphate/PtdInsP3 content of endosomal membranes may regulate endosome fusion, recycling, sorting and early to late endosome transport. It is for instance, required for the delivery of cargos like BST2/tetherin from early to late endosome and thereby participates indirectly to their degradation by the lysosome. May play a role in meiosis. This is WD repeat-containing protein 91 from Rattus norvegicus (Rat).